Reading from the N-terminus, the 382-residue chain is Myb-like transcription factor (382 aa).

Myb-like domains are found at residues 1-57, 58-108, and 109-160; these read MPRS…RWSK, ITGA…QHCL, and DPSL…ITLF. Over residues 194 to 210 the composition is skewed to acidic residues; that stretch reads MSMDASEDGDDAEDDQT. The tract at residues 194 to 240 is disordered; that stretch reads MSMDASEDGDDAEDDQTPDSYTSISTSSFDDILGGSSSSPSAADTMT. The segment covering 211–240 has biased composition (polar residues); the sequence is PDSYTSISTSSFDDILGGSSSSPSAADTMT.

Its subcellular location is the nucleus. Functionally, transcription factor; part of the gene cluster that mediates the biosynthesis of 1233A, a natural compound known as an inhibitor of HMG-CoA synthase in the mevalonate pathway and with antibacterial and antifungal activities. Involved in hygromycin B-induced transcriptional control of the cluster. The polypeptide is Myb-like transcription factor (Fusarium sp).